Consider the following 999-residue polypeptide: Probable beta-galactosidase C (999 aa).

The first 21 residues, 1-21 (MFFFRFLTTVLLLFNAKLLVA), serve as a signal peptide directing secretion. Asn-25 is a glycosylation site (N-linked (GlcNAc...) asparagine). Residues Tyr-80, Asn-125, Glu-127, and Asn-185 each coordinate substrate. The Proton donor role is filled by Glu-186. Asn-195 carries N-linked (GlcNAc...) asparagine glycosylation. Residue Tyr-249 participates in substrate binding. Cys-255 and Cys-302 are oxidised to a cystine. The N-linked (GlcNAc...) asparagine glycan is linked to Asn-274. Glu-285 acts as the Nucleophile in catalysis. Tyr-351 contacts substrate. Residues Asn-389, Asn-441, Asn-512, Asn-519, Asn-600, Asn-675, Asn-713, Asn-757, Asn-808, and Asn-897 are each glycosylated (N-linked (GlcNAc...) asparagine).

It belongs to the glycosyl hydrolase 35 family.

It localises to the secreted. It catalyses the reaction Hydrolysis of terminal non-reducing beta-D-galactose residues in beta-D-galactosides.. In terms of biological role, cleaves beta-linked terminal galactosyl residues from gangliosides, glycoproteins, and glycosaminoglycans. The chain is Probable beta-galactosidase C (lacC) from Talaromyces marneffei (strain ATCC 18224 / CBS 334.59 / QM 7333) (Penicillium marneffei).